Here is a 492-residue protein sequence, read N- to C-terminus: N-succinylglutamate 5-semialdehyde dehydrogenase (492 aa).

G225–G230 lines the NAD(+) pocket. Catalysis depends on residues E248 and C282.

The protein belongs to the aldehyde dehydrogenase family. AstD subfamily.

It catalyses the reaction N-succinyl-L-glutamate 5-semialdehyde + NAD(+) + H2O = N-succinyl-L-glutamate + NADH + 2 H(+). It participates in amino-acid degradation; L-arginine degradation via AST pathway; L-glutamate and succinate from L-arginine: step 4/5. In terms of biological role, catalyzes the NAD-dependent reduction of succinylglutamate semialdehyde into succinylglutamate. This chain is N-succinylglutamate 5-semialdehyde dehydrogenase, found in Colwellia psychrerythraea (strain 34H / ATCC BAA-681) (Vibrio psychroerythus).